The sequence spans 287 residues: Protease HtpX (287 aa).

The next 2 helical transmembrane spans lie at 4-24 and 37-57; these read VLLF…VFNI and VGLL…SLWI. Histidine 143 is a binding site for Zn(2+). The active site involves glutamate 144. Zn(2+) is bound at residue histidine 147. 2 helical membrane-spanning segments follow: residues 158–178 and 194–214; these read LIQG…ASAI and GVVM…VMWF. Glutamate 219 contacts Zn(2+).

It belongs to the peptidase M48B family. The cofactor is Zn(2+).

Its subcellular location is the cell inner membrane. The polypeptide is Protease HtpX (Idiomarina loihiensis (strain ATCC BAA-735 / DSM 15497 / L2-TR)).